The sequence spans 427 residues: MNARAEGCTAAPDPSSRVVRHERGQHEVFCGLTGIVWLHRKIQDAFFLVVGSRTCAHLIQSAAGVMIFAEPRFGTAIMEEKDLAGLTDANDELDRIVTQLIARRPDIKLLFLVGSCPSEVIKLDLSRAALRLSQRFSPAVRVLSYSGSGLETTFTQGEDACLASLVPVLPASTGTEASLLVVGSLADVVEDQFIRLFDGLGIGSVQFFPPRNSGSMPSVGPNTKFLLAQPFLPDTARELEHRGAKRLAAPFPLGVEGTTGWLRAAANAFGVDEALFDKVTQPARVRAERALDKFRKELSGRRLFFFPDSQLEIPLARFLSRELSMELVEVGTPYLHREHLAEELKLLPADAAITEGQDVDLQLDRCREARPDIVVCGLGLANPLEAEGMTTKWAIELVFTPIQGYDQASDLAELFARPLVRRAKLVA.

Residues Cys30, Cys55, and Cys116 each contribute to the [4Fe-4S] cluster site.

This sequence belongs to the BchN/ChlN family. As to quaternary structure, protochlorophyllide reductase is composed of three subunits; BchL, BchN and BchB. Forms a heterotetramer of two BchB and two BchN subunits. [4Fe-4S] cluster serves as cofactor.

It catalyses the reaction chlorophyllide a + oxidized 2[4Fe-4S]-[ferredoxin] + 2 ADP + 2 phosphate = protochlorophyllide a + reduced 2[4Fe-4S]-[ferredoxin] + 2 ATP + 2 H2O. Its pathway is porphyrin-containing compound metabolism; bacteriochlorophyll biosynthesis (light-independent). In terms of biological role, component of the dark-operative protochlorophyllide reductase (DPOR) that uses Mg-ATP and reduced ferredoxin to reduce ring D of protochlorophyllide (Pchlide) to form chlorophyllide a (Chlide). This reaction is light-independent. The NB-protein (BchN-BchB) is the catalytic component of the complex. The polypeptide is Light-independent protochlorophyllide reductase subunit N (Rhodopseudomonas palustris (strain BisA53)).